The sequence spans 249 residues: MANDPTHQFLVQPIIPIEIGGVDFSFTNASLFMVATVAAASGFLYFATSNRGLIPTRMQSVAEMSYEFIASMLREGAGKKGMVFFPFVFSLFMFVLTANLLGMFPYFFTVTSQIIVTFALACLVIGTVIVYGFYKHGLHFFGIFAPSGVPKALLPLVASIEMISFLSRPISLSVRLFANMLAGHITLKVFAGFVASMGALGALGVGGAVLPLIMTVAMTALEFLVAFLQAYVFAVLTCMYLNDAVHGGH.

6 helical membrane passes run 29–49, 84–104, 114–134, 140–160, 193–213, and 216–236; these read ASLFMVATVAAASGFLYFATS, FFPFVFSLFMFVLTANLLGMF, IIVTFALACLVIGTVIVYGFY, FFGIFAPSGVPKALLPLVASI, FVASMGALGALGVGGAVLPLI, and VAMTALEFLVAFLQAYVFAVL.

It belongs to the ATPase A chain family. In terms of assembly, F-type ATPases have 2 components, CF(1) - the catalytic core - and CF(0) - the membrane proton channel. CF(1) has five subunits: alpha(3), beta(3), gamma(1), delta(1), epsilon(1). CF(0) has three main subunits: a(1), b(2) and c(9-12). The alpha and beta chains form an alternating ring which encloses part of the gamma chain. CF(1) is attached to CF(0) by a central stalk formed by the gamma and epsilon chains, while a peripheral stalk is formed by the delta and b chains.

It localises to the cell inner membrane. Its function is as follows. Key component of the proton channel; it plays a direct role in the translocation of protons across the membrane. The protein is ATP synthase subunit a of Agrobacterium fabrum (strain C58 / ATCC 33970) (Agrobacterium tumefaciens (strain C58)).